The following is a 318-amino-acid chain: Methionyl-tRNA formyltransferase (318 aa).

Residue 112-115 (SILP) coordinates (6S)-5,6,7,8-tetrahydrofolate.

It belongs to the Fmt family.

It catalyses the reaction L-methionyl-tRNA(fMet) + (6R)-10-formyltetrahydrofolate = N-formyl-L-methionyl-tRNA(fMet) + (6S)-5,6,7,8-tetrahydrofolate + H(+). In terms of biological role, attaches a formyl group to the free amino group of methionyl-tRNA(fMet). The formyl group appears to play a dual role in the initiator identity of N-formylmethionyl-tRNA by promoting its recognition by IF2 and preventing the misappropriation of this tRNA by the elongation apparatus. The chain is Methionyl-tRNA formyltransferase from Shewanella sp. (strain MR-7).